The sequence spans 150 residues: 1,4-dihydroxy-2-naphthoyl-CoA hydrolase (150 aa).

D19 is a catalytic residue.

It belongs to the 4-hydroxybenzoyl-CoA thioesterase family. DHNA-CoA hydrolase subfamily.

The catalysed reaction is 1,4-dihydroxy-2-naphthoyl-CoA + H2O = 1,4-dihydroxy-2-naphthoate + CoA + H(+). It functions in the pathway cofactor biosynthesis; phylloquinone biosynthesis. Its pathway is quinol/quinone metabolism; 1,4-dihydroxy-2-naphthoate biosynthesis; 1,4-dihydroxy-2-naphthoate from chorismate: step 7/7. In terms of biological role, catalyzes the hydrolysis of 1,4-dihydroxy-2-naphthoyl-CoA (DHNA-CoA) to 1,4-dihydroxy-2-naphthoate (DHNA), a reaction involved in phylloquinone (vitamin K1) biosynthesis. The polypeptide is 1,4-dihydroxy-2-naphthoyl-CoA hydrolase (Prochlorococcus marinus subsp. pastoris (strain CCMP1986 / NIES-2087 / MED4)).